The primary structure comprises 116 residues: Signal recognition particle 14 kDa protein (116 aa).

It belongs to the SRP14 family. As to quaternary structure, heterodimer with ZK512.4/SRP9; binds RNA as heterodimer. Component of a signal recognition particle (SRP) complex that consists of a 7SL RNA molecule of 300 nucleotides and six protein subunits: srpa-72, srpa-68, SRP54, F37F2.2/SRP19, F25G6.8/SRP14 and ZK512.4/SRP9.

It localises to the cytoplasm. In terms of biological role, component of the signal recognition particle (SRP) complex, a ribonucleoprotein complex that mediates the cotranslational targeting of secretory and membrane proteins to the endoplasmic reticulum (ER). F37F2.2/srpa-19 together with F25G6.8/srpa-14 and the Alu portion of the SRP RNA, constitutes the elongation arrest domain of SRP. The complex of F37F2.2/srpa-19 and F25G6.8/srpa-14 is required for SRP RNA binding. In Caenorhabditis elegans, this protein is Signal recognition particle 14 kDa protein.